The primary structure comprises 180 residues: MAEPELQLVARRIRSFPDFPIPGVLFRDISPLLKDPDSFRASIRLLANHLKSKHGGKIDYIAGLDSRGFLFGPSLAQELGLGCVLIRKRGKLPGPTVSASYALEYGKAELEIQKDALEPGQKVVIVDDLLATGGTMCAACQLLGQLRAEVVECVSLVELTSLKGREKLGPVPFFSLLQYE.

Alanine 2 bears the N-acetylalanine mark. Serine 15 and serine 30 each carry phosphoserine. At tyrosine 60 the chain carries Phosphotyrosine. At serine 66 the chain carries Phosphoserine. At lysine 114 the chain carries N6-acetyllysine. Position 135 is a phosphothreonine (threonine 135).

The protein belongs to the purine/pyrimidine phosphoribosyltransferase family. Homodimer.

It is found in the cytoplasm. It catalyses the reaction AMP + diphosphate = 5-phospho-alpha-D-ribose 1-diphosphate + adenine. The protein operates within purine metabolism; AMP biosynthesis via salvage pathway; AMP from adenine: step 1/1. In terms of biological role, catalyzes a salvage reaction resulting in the formation of AMP, that is energically less costly than de novo synthesis. The sequence is that of Adenine phosphoribosyltransferase from Dipodillus campestris (North African gerbil).